Consider the following 212-residue polypeptide: Small ribosomal subunit protein eS1 (212 aa).

The protein belongs to the eukaryotic ribosomal protein eS1 family.

The protein is Small ribosomal subunit protein eS1 of Ignicoccus hospitalis (strain KIN4/I / DSM 18386 / JCM 14125).